Consider the following 24-residue polypeptide: Cytochrome c oxidase subunit 5A-2, mitochondrial (24 aa).

It belongs to the cytochrome c oxidase subunit 5A family. As to quaternary structure, component of the cytochrome c oxidase (complex IV, CIV), a multisubunit enzyme composed of 14 subunits. The complex is composed of a catalytic core of 3 subunits MT-CO1, MT-CO2 and MT-CO3, encoded in the mitochondrial DNA, and 11 supernumerary subunits COX4I, COX5A, COX5B, COX6A, COX6B, COX6C, COX7A, COX7B, COX7C, COX8 and NDUFA4, which are encoded in the nuclear genome. The complex exists as a monomer or a dimer and forms supercomplexes (SCs) in the inner mitochondrial membrane with NADH-ubiquinone oxidoreductase (complex I, CI) and ubiquinol-cytochrome c oxidoreductase (cytochrome b-c1 complex, complex III, CIII), resulting in different assemblies (supercomplex SCI(1)III(2)IV(1) and megacomplex MCI(2)III(2)IV(2)).

The protein resides in the mitochondrion inner membrane. It functions in the pathway energy metabolism; oxidative phosphorylation. Component of the cytochrome c oxidase, the last enzyme in the mitochondrial electron transport chain which drives oxidative phosphorylation. The respiratory chain contains 3 multisubunit complexes succinate dehydrogenase (complex II, CII), ubiquinol-cytochrome c oxidoreductase (cytochrome b-c1 complex, complex III, CIII) and cytochrome c oxidase (complex IV, CIV), that cooperate to transfer electrons derived from NADH and succinate to molecular oxygen, creating an electrochemical gradient over the inner membrane that drives transmembrane transport and the ATP synthase. Cytochrome c oxidase is the component of the respiratory chain that catalyzes the reduction of oxygen to water. Electrons originating from reduced cytochrome c in the intermembrane space (IMS) are transferred via the dinuclear copper A center (CU(A)) of subunit 2 and heme A of subunit 1 to the active site in subunit 1, a binuclear center (BNC) formed by heme A3 and copper B (CU(B)). The BNC reduces molecular oxygen to 2 water molecules using 4 electrons from cytochrome c in the IMS and 4 protons from the mitochondrial matrix. The protein is Cytochrome c oxidase subunit 5A-2, mitochondrial of Thunnus obesus (Bigeye tuna).